The following is a 937-amino-acid chain: Inactive tyrosine-protein kinase transmembrane receptor ROR1 (937 aa).

Residues 1–29 (MHRPRRRGTRPPLLALLAALLLAARGAAA) form the signal peptide. Topologically, residues 30–406 (QETELSVSAE…KEKNKMEILY (377 aa)) are extracellular. Residues 42 to 147 (PTSSWNISSE…EVVSSTGVLF (106 aa)) form the Ig-like C2-type domain. N47 and N66 each carry an N-linked (GlcNAc...) asparagine glycan. Disulfide bonds link C79/C131, C170/C235, C178/C228, C219/C260, C248/C296, C252/C282, C313/C391, C334/C374, and C362/C386. In terms of domain architecture, FZ spans 165–299 (EEDGFCQPYR…SPEAANCIRI (135 aa)). N184 is a glycosylation site (N-linked (GlcNAc...) asparagine). Residues 312–391 (KCYNSTGVDY…KSDLCDIPAC (80 aa)) form the Kringle domain. N-linked (GlcNAc...) asparagine glycosylation occurs at N315. A helical membrane pass occupies residues 407–427 (ILVPSVAIPLAIALLFFFICV). The Cytoplasmic portion of the chain corresponds to 428–937 (CRNNQKSSSA…HTESMISAEL (510 aa)). A Protein kinase domain is found at 473 to 746 (VRFMEELGEC…PRFKDIHVRL (274 aa)). Residues 479 to 487 (LGECAFGKI) and K506 contribute to the ATP site. Y645 carries the phosphotyrosine; by autocatalysis modification. Positions 753–762 (SSHTSSTTPS) are enriched in low complexity. 2 disordered regions span residues 753 to 779 (SSHTSSTTPSGGNATTQTTSLSASPVS) and 833 to 890 (AAHY…HMSI). Polar residues predominate over residues 763–779 (GGNATTQTTSLSASPVS). Low complexity predominate over residues 854-864 (RSPSSASGSTS). The span at 865 to 880 (TGHVTSLPSSGSNQEA) shows a compositional bias: polar residues.

The protein belongs to the protein kinase superfamily. Tyr protein kinase family. ROR subfamily. In terms of assembly, interacts with ERBB2 and IGFBP5. Expressed strongly in human heart, lung and kidney, but weakly in the CNS. Isoform Short is strongly expressed in fetal and adult CNS and in a variety of human cancers, including those originating from CNS or PNS neuroectoderm.

It is found in the membrane. Its subcellular location is the cell projection. The protein localises to the axon. Its function is as follows. Has very low kinase activity in vitro and is unlikely to function as a tyrosine kinase in vivo. Receptor for ligand WNT5A which activate downstream NFkB signaling pathway and may result in the inhibition of WNT3A-mediated signaling. In inner ear, crucial for spiral ganglion neurons to innervate auditory hair cells. Via IGFBP5 ligand, forms a complex with ERBB2 to enhance CREB oncogenic signaling. The sequence is that of Inactive tyrosine-protein kinase transmembrane receptor ROR1 (ROR1) from Homo sapiens (Human).